We begin with the raw amino-acid sequence, 178 residues long: Interleukin-10 (178 aa).

Residues 1 to 18 form the signal peptide; sequence MPRSALLCCLILLAGVAA. 2 disulfides stabilise this stretch: Cys-30–Cys-126 and Cys-80–Cys-132. Asn-134 carries N-linked (GlcNAc...) asparagine glycosylation.

Belongs to the IL-10 family. As to quaternary structure, homodimer. Interacts with IL10RA and IL10RB.

It is found in the secreted. Its function is as follows. Major immune regulatory cytokine that acts on many cells of the immune system where it has profound anti-inflammatory functions, limiting excessive tissue disruption caused by inflammation. Mechanistically, IL10 binds to its heterotetrameric receptor comprising IL10RA and IL10RB leading to JAK1 and STAT2-mediated phosphorylation of STAT3. In turn, STAT3 translocates to the nucleus where it drives expression of anti-inflammatory mediators. Targets antigen-presenting cells (APCs) such as macrophages and monocytes and inhibits their release of pro-inflammatory cytokines including granulocyte-macrophage colony-stimulating factor /GM-CSF, granulocyte colony-stimulating factor/G-CSF, IL-1 alpha, IL-1 beta, IL-6, IL-8 and TNF-alpha. Also interferes with antigen presentation by reducing the expression of MHC-class II and co-stimulatory molecules, thereby inhibiting their ability to induce T cell activation. In addition, controls the inflammatory response of macrophages by reprogramming essential metabolic pathways including mTOR signaling. In Lama glama (Llama), this protein is Interleukin-10 (IL10).